The primary structure comprises 4691 residues: Plectin (4691 aa).

The tract at residues 1-1478 is globular 1; sequence MVAGMLMPLD…SELTTLTSQY (1478 aa). At Arg21 the chain carries Phosphoserine. Val26 is modified (phosphotyrosine). Disordered regions lie at residues 113–161 and 167–186; these read RSPH…TPVV and GTLA…RDRV. The span at 137 to 154 shows a compositional bias: basic and acidic residues; that stretch reads DPAREERQVYRRKEREEG. The tract at residues 181 to 411 is actin-binding; it reads DERDRVQKKT…YVSSLYDAMP (231 aa). Calponin-homology (CH) domains follow at residues 185–293 and 306–411; these read RVQK…LHFQ and MTAK…DAMP. The Spectrin 1 repeat unit spans residues 653 to 727; the sequence is LQSTQRRPEL…ERARNDESQL (75 aa). A Phosphoserine modification is found at Ser728. Spectrin repeat units follow at residues 748 to 832 and 845 to 938; these read KLLN…REDH and LQTQ…AIVQ. Thr823 is modified (phosphothreonine). The region spanning 949–1006 is the SH3 domain; the sequence is RGHVPLIAVCDYKQVEVTVHKGDQCQLVGPAQPSHWKVLSGSSSEAAVPSVCFLVPPP. The segment at 963-4572 is required for interaction with intermediate filament proteins; sequence VEVTVHKGDQ…ARTAQKLRDV (3610 aa). Ser1055 bears the Phosphoserine mark. The Spectrin 4 repeat unit spans residues 1323–1423; the sequence is RERVTQLLER…QKFAKQYINA (101 aa). Ser1443 is subject to Phosphoserine. Coiled coils occupy residues 1477 to 1697 and 1729 to 2764; these read QYIK…ERRL and SFAE…TTQA. The interval 1479 to 2762 is central fibrous rod domain; that stretch reads IKFISETLRR…ALAHSEIATT (1284 aa). Positions 1626–1653 are disordered; that stretch reads RAEEAEAQKRQAQEEAERLRRQVQDESQ. At Ser1729 the chain carries Phosphoserine. At Lys1733 the chain carries N6-acetyllysine. Disordered regions lie at residues 1801-1835, 2100-2141, and 2223-2317; these read SLAQ…RELA, AEDT…SLAA, and RLRS…KHKK. Basic and acidic residues-rich tracts occupy residues 1806–1835, 2100–2116, 2124–2136, and 2223–2266; these read DAEK…RELA, AEDT…EAAR, EEQR…ERVQ, and RLRS…KQSA. Over residues 2267–2280 the composition is skewed to low complexity; sequence EEQAQAQAQAQAAA. The span at 2281–2296 shows a compositional bias: basic and acidic residues; it reads EKLRKEAEQEAARRAQ. Ser2639 bears the Phosphoserine mark. Residue Lys2644 is modified to N6-acetyllysine. The segment at 2675 to 2728 is disordered; it reads LREEQQRQQQQMEQEKQELMASMEEARRRQREAEEGVRRKQEELQHLEQQRQQQ. The segment covering 2687–2728 has biased composition (basic and acidic residues); the sequence is EQEKQELMASMEEARRRQREAEEGVRRKQEELQHLEQQRQQQ. The interval 2763–4691 is globular 2; that stretch reads QAASTKALPN…SLGGPESAVA (1929 aa). Ser2781 carries the post-translational modification Phosphoserine. The residue at position 2788 (Tyr2788) is a Phosphotyrosine. Plectin repeat units lie at residues 2795-2832, 2833-2870, 2871-2908, 2909-2946, 2947-2984, and 2988-3022; these read QKVP…REDV, YRYL…PGTA, LILL…PELH, HKLL…RDHG, VRLL…EEMN, and SDPS…PETG. Ser2809 is subject to Phosphoserine. Thr2893 is subject to Phosphothreonine. Phosphotyrosine is present on Tyr3040. 2 positions are modified to N6-acetyllysine: Lys3060 and Lys3098. 6 Plectin repeats span residues 3123–3160, 3161–3198, 3199–3236, 3237–3274, 3275–3312, and 3315–3350; these read ALVP…ADSV, RQAL…PEVA, VALL…PELH, EKLL…REQG, LRLL…KETN, and LTSP…QLTG. Basic and acidic residues predominate over residues 3312–3326; the sequence is NRALTSPRDDARVYH. A disordered region spans residues 3312–3338; it reads NRALTSPRDDARVYHDPSTQEPVTYSQ. Residues 3328-3338 show a composition bias toward polar residues; the sequence is PSTQEPVTYSQ. A Phosphotyrosine modification is found at Tyr3369. Lys3427 bears the N6-acetyllysine mark. 5 Plectin repeats span residues 3492–3529, 3530–3567, 3568–3605, 3606–3643, and 3647–3681; these read RTLL…PSTA, TLLL…PELH, EKLL…RDHA, IRLL…EEMN, and ADPS…PETG. Thr3792 bears the Phosphothreonine mark. Tyr3797 is modified (phosphotyrosine). Plectin repeat units follow at residues 3827-3864, 3865-3902, 3903-3940, 3941-3978, and 3982-4015; these read WRYL…AEVA, RLLL…PELH, DRLL…AEEA, LRLL…KDTH, and SEPS…DPSG. The required for interaction with type2 keratins, DES and VIM stretch occupies residues 3954–4291; the sequence is VDPRLGFHLP…KRRVVIVDPE (338 aa). The residue at position 4037 (Thr4037) is a Phosphothreonine. Ser4061 carries the post-translational modification Phosphoserine. 6 Plectin repeats span residues 4070–4107, 4108–4145, 4146–4183, 4184–4221, 4225–4259, and 4272–4312; these read QKFL…PGTA, FELL…PEFK, DKLL…KDHG, IRLL…EEMN, TDPS…PQTG, and RKTS…HQTY. A binding to intermediate filaments region spans residues 4257-4307; the sequence is QTGLCLLPLKEKKRERKTSSKSSVRKRRVVIVDPETGKEMSVYEAYRKGLI. The disordered stretch occupies residues 4387–4420; it reads FRSRSSSVGSSSSYPISSAGPRTQLASWSDPTEE. 8 positions are modified to phosphoserine: Ser4389, Ser4391, Ser4392, Ser4393, Ser4396, Ser4397, Ser4398, and Ser4399. Over residues 4389–4404 the composition is skewed to low complexity; it reads SRSSSVGSSSSYPISS. Tyr4400 is modified (phosphotyrosine). Phosphoserine is present on residues Ser4403 and Ser4413. Residues 4406–4416 show a composition bias toward polar residues; the sequence is GPRTQLASWSD. Plectin repeat units lie at residues 4415-4452, 4453-4490, 4491-4528, 4529-4566, and 4567-4604; these read SDPT…NITG, QRLL…KIMV, DRIN…YEAG, QRFL…ARTA, and QKLR…EGTG. Thr4418 is modified (phosphothreonine). Residues 4503 to 4572 form a required for efficient interaction with KRT5 and KRT14 heterodimers region; it reads FEDPRTKTKM…ARTAQKLRDV (70 aa). The residue at position 4546 (Thr4546) is a Phosphothreonine; by CDK1. Residues Ser4614 and Ser4620 each carry the phosphoserine modification. The segment covering 4618 to 4678 has biased composition (low complexity); that stretch reads YYSPYSVSGS…SGYGRRYASG (61 aa). The tract at residues 4618–4691 is disordered; it reads YYSPYSVSGS…SLGGPESAVA (74 aa). Position 4622 is a phosphotyrosine (Tyr4622). 3 positions are modified to phosphoserine: Ser4623, Ser4625, and Ser4629. Phosphothreonine is present on Thr4630. The interval 4632–4647 is 4 X 4 AA tandem repeats of G-S-R-X; sequence GSRTGSRTGSRAGSRR. At Ser4633 the chain carries Phosphoserine. An omega-N-methylarginine mark is found at Arg4634 and Arg4647. Phosphoserine is present on residues Ser4649 and Ser4682.

It belongs to the plakin or cytolinker family. Homodimer or homotetramer. Interacts (via actin-binding domain) with SYNE3. Interacts (via calponin-homology (CH) 1 domain) with VIM (via rod region). Interacts (via N-terminus) with DST isoform 2 (via N-terminus). Interacts with FER. Interacts with TOR1A. Interacts with ANK3. Identified in complexes that contain VIM, EZR, AHNAK, BFSP1, BFSP2, ANK2, PLEC, PRX and spectrin. As to quaternary structure, interacts with KRT14, heterodimers consisting of KRT8 and KRT18, heterodimers consisting of KRT5 and KRT14, heterodimers consisting of KRT14 and KRT15, and heterodimers consisting of KRT1 and KRT10. Interacts with DES and VIM. In terms of processing, phosphorylated by CDK1; regulates dissociation from intermediate filaments during mitosis. Isoform PLEC-1A is phosphorylated on Ser-21. Isoform PLEC-1A is phosphorylated on Tyr-26. In terms of tissue distribution, detected in eye lens fiber cells (at protein level). Expressed at high levels in lung, brain, small intestine, muscle, heart and skin with lower levels found in kidney, liver, uterus, spleen and salivary gland.

Its subcellular location is the cytoplasm. It localises to the cytoskeleton. The protein localises to the cell junction. The protein resides in the hemidesmosome. It is found in the cell projection. Its subcellular location is the podosome. Functionally, interlinks intermediate filaments with microtubules and microfilaments and anchors intermediate filaments to desmosomes or hemidesmosomes. May be involved not only in the cross-linking and stabilization of cytoskeletal intermediate filaments network, but also in the regulation of their dynamics. The sequence is that of Plectin (Plec) from Mus musculus (Mouse).